The sequence spans 200 residues: Recombination protein RecR (200 aa).

The C4-type zinc-finger motif lies at 59 to 74; it reads CSVCGSLDTSDPCAIC. Residues 82 to 177 form the Toprim domain; the sequence is RLLCVVEEVG…SVTMLARGVP (96 aa).

Belongs to the RecR family.

Functionally, may play a role in DNA repair. It seems to be involved in an RecBC-independent recombinational process of DNA repair. It may act with RecF and RecO. This chain is Recombination protein RecR, found in Caulobacter sp. (strain K31).